The sequence spans 175 residues: NADH-ubiquinone oxidoreductase chain 6 (175 aa).

5 helical membrane passes run 1–21 (MMYMVFLLSVAFVISFIGFSS), 26–46 (IYGGLGLIVGGGVGCGIVMGL), 47–67 (GGSFLGLMVFLVYLGGMLVVF), 87–107 (VILSALFVGLLVEVAMIVWMI), and 152–172 (WLVILAGWSLFVSIFIVIEIT).

This sequence belongs to the complex I subunit 6 family.

It is found in the mitochondrion membrane. The enzyme catalyses a ubiquinone + NADH + 5 H(+)(in) = a ubiquinol + NAD(+) + 4 H(+)(out). Functionally, core subunit of the mitochondrial membrane respiratory chain NADH dehydrogenase (Complex I) that is believed to belong to the minimal assembly required for catalysis. Complex I functions in the transfer of electrons from NADH to the respiratory chain. The immediate electron acceptor for the enzyme is believed to be ubiquinone. The protein is NADH-ubiquinone oxidoreductase chain 6 (MT-ND6) of Dasypus novemcinctus (Nine-banded armadillo).